Consider the following 854-residue polypeptide: MNKSTSSLDYIEKLPLPAEQAEVLREKLPQAAWNDQAVLHQALSEGSPSEEHQVNVQSEDDATLQSVQARLEMAWAEGLDNGKQLGTDREGRTALKAMPVITRASMFPDVWRTNPLVRWWESLLGRTVPPRPHYSPEEKISENRWRLVGTIRRYILLVLTLFQTAIATWYMKTILPYQGWALIDPFEMAGQPWTRSLMQLLPYVLQSGILVLFAVLFCWVSAGFWTALMGFLQLLIGRDKYSISSTTVGNEPLNPEHRTALIMPICNEDVERVFAGLRATYESVEATGNLEHFDIYVLSDSNDPDICVAEQKAWMELCRDVGGTGRIFYRRRRRRVKRKSGNIDDFCRRWGNQYSYMVILDADSVMSGECLTSLVRLMEANPNAGIIQSSPKASGMDTLYARCQQFATRVYGPLFTAGLHFWQLGESHYWGHNAIIRVKPFIEHCALAPLPGEGSFAGAILSHDFVEAALMRRAGWGVWIAYDLPGSYEELPPNLLDELKRDRRWCHGNLMNFRLFLVKGMHPVHRAVFLTGVMSYLSAPLWFMFLMLSTALQVVHTLMEPQYFLQPRQLFPVWPQWRPELAIALFSTTLVLLFLPKLLSVILVWAKGAKEYGGALRVFISLLLEMLFSVLLAPVRMLFHTVFVVSAFLGWSVQWNSPQRDDDATPWSEAFVRHGSQLILGLVWAIGMAWLDLRFLWWLAPIVFSLILSPFVSVYSSRASLGLGCKRAKLLMIPEEFNPPRELVATDEYCRLNHQRRLDNGFMQAVFDPSINALASAMATARHRFSQAIEDVREKNVRDALNRKPEEVSNNQRLVLLSDPVTISRLHYHVWQKPETYAAWVESYQKLPAPHIKS.

7 helical membrane-spanning segments follow: residues Ile155–Leu175, Ile209–Met229, Val528–Leu548, Ile583–Leu603, Phe619–Phe639, Phe671–Leu691, and Phe695–Tyr715.

The protein belongs to the glycosyltransferase 2 family. OpgH subfamily.

The protein localises to the cell inner membrane. It participates in glycan metabolism; osmoregulated periplasmic glucan (OPG) biosynthesis. Its function is as follows. Involved in the biosynthesis of osmoregulated periplasmic glucans (OPGs). This is Glucans biosynthesis glucosyltransferase H from Pectobacterium carotovorum subsp. carotovorum (strain PC1).